Consider the following 497-residue polypeptide: Glutamyl-tRNA(Gln) amidotransferase subunit A (497 aa).

Catalysis depends on charge relay system residues Lys-91 and Ser-166. The tract at residues 143 to 171 (SSTENSAYGPTHNPWDLERTAGGSGGGSS) is disordered. The Acyl-ester intermediate role is filled by Ser-190.

It belongs to the amidase family. GatA subfamily. In terms of assembly, heterotrimer of A, B and C subunits.

It catalyses the reaction L-glutamyl-tRNA(Gln) + L-glutamine + ATP + H2O = L-glutaminyl-tRNA(Gln) + L-glutamate + ADP + phosphate + H(+). In terms of biological role, allows the formation of correctly charged Gln-tRNA(Gln) through the transamidation of misacylated Glu-tRNA(Gln) in organisms which lack glutaminyl-tRNA synthetase. The reaction takes place in the presence of glutamine and ATP through an activated gamma-phospho-Glu-tRNA(Gln). The chain is Glutamyl-tRNA(Gln) amidotransferase subunit A from Corynebacterium glutamicum (strain R).